A 501-amino-acid polypeptide reads, in one-letter code: uncharacterized protein (501 aa).

Transmembrane regions (helical) follow at residues 14-34 (AIFIIPFWILSIALWFSSGSV), 73-93 (FILFQIIPINILCFLPLLGYM), 111-131 (IFGIMMLITIPLFLIVSICIF), 197-217 (FIIATIVFSFSMLVIVLVLLI), 274-294 (ILLSIFQLFYIGSYFSLYYFG), 297-317 (FNLIPFFINLIILFISYYNLI), and 466-486 (FLVLIGLSGLFNILYLKRLIL).

It is found in the membrane. This is an uncharacterized protein from Dictyostelium discoideum (Social amoeba).